Here is a 272-residue protein sequence, read N- to C-terminus: Phosphatidylglycerol--prolipoprotein diacylglyceryl transferase (272 aa).

7 helical membrane passes run 17–37 (LQVHWYGLMYLLAFLCAWGLA), 55–75 (LVFYGALGVVLGGRIGYVLFY), 90–110 (VWTGGMSFHGGFLGVMIAMLF), 125–145 (FVAPCVPTGLMFGRIGNFIGG), 174–194 (PSQIYQALCEGLLLFIILWWF), 202–222 (MAVSALFLMGYGVARFVMEFF), and 230–250 (GFILFGWMTKGQILTVPMLLI). Arg138 is an a 1,2-diacyl-sn-glycero-3-phospho-(1'-sn-glycerol) binding site.

The protein belongs to the Lgt family.

The protein resides in the cell inner membrane. The enzyme catalyses L-cysteinyl-[prolipoprotein] + a 1,2-diacyl-sn-glycero-3-phospho-(1'-sn-glycerol) = an S-1,2-diacyl-sn-glyceryl-L-cysteinyl-[prolipoprotein] + sn-glycerol 1-phosphate + H(+). The protein operates within protein modification; lipoprotein biosynthesis (diacylglyceryl transfer). Catalyzes the transfer of the diacylglyceryl group from phosphatidylglycerol to the sulfhydryl group of the N-terminal cysteine of a prolipoprotein, the first step in the formation of mature lipoproteins. The protein is Phosphatidylglycerol--prolipoprotein diacylglyceryl transferase of Acinetobacter baumannii (strain AB307-0294).